We begin with the raw amino-acid sequence, 101 residues long: NAD(P)H-quinone oxidoreductase subunit 4L, chloroplastic (101 aa).

The next 3 membrane-spanning stretches (helical) occupy residues 2–22 (MLEH…YGLI), 32–52 (MCLE…SDFF), and 61–81 (ILSI…LAIV).

It belongs to the complex I subunit 4L family. NDH is composed of at least 16 different subunits, 5 of which are encoded in the nucleus.

Its subcellular location is the plastid. The protein localises to the chloroplast thylakoid membrane. The enzyme catalyses a plastoquinone + NADH + (n+1) H(+)(in) = a plastoquinol + NAD(+) + n H(+)(out). It catalyses the reaction a plastoquinone + NADPH + (n+1) H(+)(in) = a plastoquinol + NADP(+) + n H(+)(out). In terms of biological role, NDH shuttles electrons from NAD(P)H:plastoquinone, via FMN and iron-sulfur (Fe-S) centers, to quinones in the photosynthetic chain and possibly in a chloroplast respiratory chain. The immediate electron acceptor for the enzyme in this species is believed to be plastoquinone. Couples the redox reaction to proton translocation, and thus conserves the redox energy in a proton gradient. The sequence is that of NAD(P)H-quinone oxidoreductase subunit 4L, chloroplastic from Buxus microphylla (Littleleaf boxwood).